Consider the following 77-residue polypeptide: Metallocarboxypeptidase inhibitor (77 aa).

Positions 1 to 32 (MAQKFTILFTILLVVIAAQDVMAQDATLTKLF) are cleaved as a signal peptide. Pyrrolidone carboxylic acid is present on glutamine 33. Cystine bridges form between cysteine 39–cysteine 55, cysteine 43–cysteine 58, and cysteine 49–cysteine 65. Positions 70 to 77 (GRAMAIGV) are cleaved as a propeptide — hydrophobic peptide.

This sequence to potato MCPI. As to expression, ovaries.

In terms of biological role, may play a defensive role against insect attacks. The polypeptide is Metallocarboxypeptidase inhibitor (Solanum lycopersicum (Tomato)).